Reading from the N-terminus, the 488-residue chain is Probable G-protein coupled receptor Mth-like 12 (488 aa).

Positions 1–17 are cleaved as a signal peptide; that stretch reads MFLWLKCFCTLIIVTIA. The Extracellular segment spans residues 18–215; sequence KNSSAKIPHC…NRRCYRNVMP (198 aa). 3 N-linked (GlcNAc...) asparagine glycosylation sites follow: N19, N34, and N55. Intrachain disulfides connect C27/C81, C83/C88, C92/C189, C93/C104, and C155/C209. Residue N141 is glycosylated (N-linked (GlcNAc...) asparagine). The chain crosses the membrane as a helical span at residues 216–236; the sequence is GIAQLSVISVVGFILTLAVYL. Residues 237-247 are Cytoplasmic-facing; that stretch reads SVEKLRNLLGK. A helical transmembrane segment spans residues 248–268; the sequence is CLICSLFSMFMEYFIWTMDYF. The Extracellular portion of the chain corresponds to 269-283; sequence RLLQSICSAAGYMKY. A helical membrane pass occupies residues 284 to 304; sequence FFSMSSYLWFSVVSFHLWELF. At 305-315 the chain is on the cytoplasmic side; that stretch reads TSLNRHEPQYR. A helical transmembrane segment spans residues 316 to 336; that stretch reads FLIYNTFVWCTAAIPTVVIFS. Topologically, residues 337 to 373 are extracellular; that stretch reads MNQMWENDPGKSEWLPLVGYFGCSVKDWNSSSWFYSH. An N-linked (GlcNAc...) asparagine glycan is attached at N365. A helical membrane pass occupies residues 374–394; it reads IPIVILNSFNVIMFVLTAIYI. Over 395 to 416 the chain is Cytoplasmic; that stretch reads WKVKKGVKSFAQHDERNTTCLE. Residues 417–437 form a helical membrane-spanning segment; sequence FNVQTYIQFVRLFLIMGASWL. The Extracellular portion of the chain corresponds to 438–454; that stretch reads LDQLTRLAEDSHLLLDT. The helical transmembrane segment at 455 to 475 threads the bilayer; the sequence is IVLNLTVYLNAAFGILIFVLL. Residues 476–488 are Cytoplasmic-facing; that stretch reads ILKGSTFKMIMER.

This sequence belongs to the G-protein coupled receptor 2 family. Mth subfamily.

Its subcellular location is the cell membrane. This is Probable G-protein coupled receptor Mth-like 12 (mthl12) from Drosophila melanogaster (Fruit fly).